The sequence spans 408 residues: Peptidase T (408 aa).

His-78 is a Zn(2+) binding site. Residue Asp-80 is part of the active site. Asp-141 lines the Zn(2+) pocket. Residue Glu-175 is the Proton acceptor of the active site. Zn(2+) contacts are provided by Glu-176, Asp-198, and His-380.

Belongs to the peptidase M20B family. It depends on Zn(2+) as a cofactor.

The protein resides in the cytoplasm. The enzyme catalyses Release of the N-terminal residue from a tripeptide.. Cleaves the N-terminal amino acid of tripeptides. The protein is Peptidase T of Clostridium botulinum (strain Langeland / NCTC 10281 / Type F).